Reading from the N-terminus, the 421-residue chain is MGSRGLFERARKVIPSGVNSPVRYYAPYPFFAASASGGSIRDADGRKYTDLCNGYGALLLGHGRGEVVRAVSAQLRRGTLFCVPTEQEVELARLISGNYPSMESTRLVNTGGEATMTAIRLARGFTKRDRIIKFDGCYHGAHGSVLVKAGSGSAHLGISTSEGVPRGLARQTTVIPYNDEAAFEGAAADDVAAVIVEPVMGNMGVIPPKKGFLRLLRKLSSRLGMQLIFDETITGFRLSAGGAQEAFGVRPDITTLAKALGGGLPIAAVGGKKNIMERLAPGGSVYEASTFAGNPVSVSAALASIRTINRIKGRLYPRLERAAAALASSIADDAADLGLDRQINRVASIFQVFFTAEPVTDAASAKRADAARFDKMFRALLKNGVFVAPSQFEMASLSAAHTVEDLRNVSAAYRTALGAAR.

Residue K258 is modified to N6-(pyridoxal phosphate)lysine.

The protein belongs to the class-III pyridoxal-phosphate-dependent aminotransferase family. HemL subfamily. Requires pyridoxal 5'-phosphate as cofactor.

It is found in the cytoplasm. It catalyses the reaction (S)-4-amino-5-oxopentanoate = 5-aminolevulinate. The protein operates within porphyrin-containing compound metabolism; protoporphyrin-IX biosynthesis; 5-aminolevulinate from L-glutamyl-tRNA(Glu): step 2/2. The polypeptide is Glutamate-1-semialdehyde 2,1-aminomutase 1 (Cenarchaeum symbiosum (strain A)).